The primary structure comprises 1081 residues: Carbamoyl phosphate synthase large chain (1081 aa).

A carboxyphosphate synthetic domain region spans residues 1–403 (MPRRNDLNKI…SFQKALRSLE (403 aa)). ATP is bound by residues R129, R170, G177, K209, L211, E216, G242, V243, H244, Q286, and E300. One can recognise an ATP-grasp 1 domain in the interval 133-329 (KEAMARIGVP…IAKFAAKLAV (197 aa)). 3 residues coordinate Mg(2+): Q286, E300, and N302. Q286, E300, and N302 together coordinate Mn(2+). The segment at 404-553 (TGRFGFGCDR…STYEPEECEV (150 aa)) is oligomerization domain. The segment at 554–944 (LPSDKPKVMI…AFAKAELGAG (391 aa)) is carbamoyl phosphate synthetic domain. The ATP-grasp 2 domain occupies 686-878 (EKILHELEIS…LAKIASLVMS (193 aa)). ATP is bound by residues R722, K761, L763, E768, G794, I795, H796, S797, Q837, and E849. Mg(2+)-binding residues include Q837, E849, and N851. 3 residues coordinate Mn(2+): Q837, E849, and N851. Positions 945–1081 (VILATTGTVF…DVKALQDYLG (137 aa)) constitute an MGS-like domain. The allosteric domain stretch occupies residues 945–1081 (VILATTGTVF…DVKALQDYLG (137 aa)).

The protein belongs to the CarB family. Composed of two chains; the small (or glutamine) chain promotes the hydrolysis of glutamine to ammonia, which is used by the large (or ammonia) chain to synthesize carbamoyl phosphate. Tetramer of heterodimers (alpha,beta)4. Requires Mg(2+) as cofactor. Mn(2+) serves as cofactor.

It carries out the reaction hydrogencarbonate + L-glutamine + 2 ATP + H2O = carbamoyl phosphate + L-glutamate + 2 ADP + phosphate + 2 H(+). It catalyses the reaction hydrogencarbonate + NH4(+) + 2 ATP = carbamoyl phosphate + 2 ADP + phosphate + 2 H(+). The protein operates within amino-acid biosynthesis; L-arginine biosynthesis; carbamoyl phosphate from bicarbonate: step 1/1. Its pathway is pyrimidine metabolism; UMP biosynthesis via de novo pathway; (S)-dihydroorotate from bicarbonate: step 1/3. Large subunit of the glutamine-dependent carbamoyl phosphate synthetase (CPSase). CPSase catalyzes the formation of carbamoyl phosphate from the ammonia moiety of glutamine, carbonate, and phosphate donated by ATP, constituting the first step of 2 biosynthetic pathways, one leading to arginine and/or urea and the other to pyrimidine nucleotides. The large subunit (synthetase) binds the substrates ammonia (free or transferred from glutamine from the small subunit), hydrogencarbonate and ATP and carries out an ATP-coupled ligase reaction, activating hydrogencarbonate by forming carboxy phosphate which reacts with ammonia to form carbamoyl phosphate. The sequence is that of Carbamoyl phosphate synthase large chain from Synechocystis sp. (strain ATCC 27184 / PCC 6803 / Kazusa).